The chain runs to 233 residues: Ion-translocating oxidoreductase complex subunit E (233 aa).

The next 6 membrane-spanning stretches (helical) occupy residues 18–38, 39–59, 69–89, 92–112, 128–148, and 182–202; these read ALVQLLGLCPLLAVSSTATNA, LGLGLATTLVLVCTNTAVSAL, IPIYVMIIASVVSTVQMLINA, FGLYQSLGIFIPLIVTNCIVI, ALDGFAMGMGATCALFVLGAL, and PFLLAMLPPGAFIGLGLLLAG.

It belongs to the NqrDE/RnfAE family. As to quaternary structure, the complex is composed of six subunits: RnfA, RnfB, RnfC, RnfD, RnfE and RnfG.

It localises to the cell inner membrane. Functionally, part of a membrane-bound complex that couples electron transfer with translocation of ions across the membrane. This Yersinia pseudotuberculosis serotype O:3 (strain YPIII) protein is Ion-translocating oxidoreductase complex subunit E.